Reading from the N-terminus, the 226-residue chain is MQLSTFSHSEDELLKKANWLAGFTLGEIAHQLNIDVPLDLRRDKGWVGQLIETALGAKAGSKPEQDFAHLGIELKTIPINHKGFPLETTFVSLAPLTQNTGITWQTSHVRHKLQKVLWIPVQGERHIPVAERHIGQPILWEPSCEQEQQLKNDWEELMEYIIFGRLNEINATLGEVLQLRPKGRNRRSLTAAVNQQGERVQSLPLGFYLRKQFTAEILQNFLRSPL.

This sequence belongs to the MutH family.

It localises to the cytoplasm. Its function is as follows. Sequence-specific endonuclease that cleaves unmethylated GATC sequences. It is involved in DNA mismatch repair. This is DNA mismatch repair protein MutH from Actinobacillus pleuropneumoniae serotype 5b (strain L20).